Consider the following 305-residue polypeptide: Tyrosine recombinase XerD (305 aa).

The region spanning 1–83 is the Core-binding (CB) domain; it reads MEFISQFLEM…TIKSYYEFLI (83 aa). Residues 104–298 enclose the Tyr recombinase domain; the sequence is KLPEILSIDD…QTNHLKKALL (195 aa). Active-site residues include R145, K175, H250, R253, and H276. The O-(3'-phospho-DNA)-tyrosine intermediate role is filled by Y285.

Belongs to the 'phage' integrase family. XerD subfamily. As to quaternary structure, forms a cyclic heterotetrameric complex composed of two molecules of XerC and two molecules of XerD.

The protein localises to the cytoplasm. Its function is as follows. Site-specific tyrosine recombinase, which acts by catalyzing the cutting and rejoining of the recombining DNA molecules. The XerC-XerD complex is essential to convert dimers of the bacterial chromosome into monomers to permit their segregation at cell division. It also contributes to the segregational stability of plasmids. This chain is Tyrosine recombinase XerD, found in Rickettsia bellii (strain RML369-C).